A 469-amino-acid polypeptide reads, in one-letter code: Solute carrier family 52, riboflavin transporter, member 3 (469 aa).

Over 1–6 (MALLTH) the chain is Cytoplasmic. Residues 7–27 (LLVCTFGMGSWVAINGLWVEL) traverse the membrane as a helical segment. Topologically, residues 28-43 (PLLVTELPEGWYLPSY) are extracellular. The chain crosses the membrane as a helical span at residues 44–64 (LTMVIQLANIGPLLVTLLHHF). Residues 65-71 (QPSCLSE) lie on the Cytoplasmic side of the membrane. The helical transmembrane segment at 72–92 (VPIIFTVLAVGTVACALFAFL) threads the bilayer. Topologically, residues 93–105 (WNVTSWVLDGRHS) are extracellular. Residue asparagine 94 is glycosylated (N-linked (GlcNAc...) asparagine). The helical transmembrane segment at 106–126 (IAFMVLTFFLALVDCTSSVTF) threads the bilayer. Topologically, residues 127–137 (LPFMSRLPACY) are cytoplasmic. A helical membrane pass occupies residues 138–158 (LTTFFVGEGLSSLLPALVALA). Residues 159–220 (QGSGLTTCVN…SRYLPANFSP (62 aa)) lie on the Extracellular side of the membrane. N-linked (GlcNAc...) asparagine glycosylation is present at asparagine 168. Residues 221-241 (LVFFLLLSFMMACCLAAFFLL) form a helical membrane-spanning segment. Residues 242–297 (QRQPRPRESSIEDLLTSQVTLHSIRPREGDDLGPPDPGPSSKAQGLPEEKTASDHP) are Cytoplasmic-facing. Serine 251 is modified (phosphoserine). The disordered stretch occupies residues 266–290 (RPREGDDLGPPDPGPSSKAQGLPEE). The helical transmembrane segment at 298-318 (AHLAFIYVLVAFVNALTNGVL) threads the bilayer. Topologically, residues 319-335 (PSVQTYSCLSYGPVAYH) are extracellular. Residues 336–356 (LSATLSSMANPLACFLSMFLP) form a helical membrane-spanning segment. Over 357-361 (HRSLP) the chain is Cytoplasmic. Residues 362-382 (FLGVLTVLGTGFGAYNMAMAV) form a helical membrane-spanning segment. Over 383–396 (MSPCPLMQGHWAGE) the chain is Extracellular. A helical membrane pass occupies residues 397–417 (ILIVASWVLFIGCLSYVKVML). Topologically, residues 418–427 (GVILRDRSRS) are cytoplasmic. The chain crosses the membrane as a helical span at residues 428-448 (ALVWCGAAVQLGSLLGALLMF). The Extracellular portion of the chain corresponds to 449–469 (PLVNVLRLFSSADFCSLQCSA).

The protein belongs to the riboflavin transporter family.

The protein localises to the cell membrane. It carries out the reaction riboflavin(in) = riboflavin(out). Plasma membrane transporter mediating the uptake by cells of the water soluble vitamin B2/riboflavin that plays a key role in biochemical oxidation-reduction reactions of the carbohydrate, lipid, and amino acid metabolism. The protein is Solute carrier family 52, riboflavin transporter, member 3 (SLC52A3) of Ailuropoda melanoleuca (Giant panda).